Consider the following 617-residue polypeptide: Zinc finger protein 613 (617 aa).

The KRAB domain maps to 8 to 78 (LTLEDVAVEF…ENEIHSQICP (71 aa)). 12 C2H2-type zinc fingers span residues 204-226 (HVCT…QRVH), 232-254 (HGCS…QRNH), 260-282 (YECT…QKIH), 288-310 (YICS…QRVH), 316-338 (HGCS…QRTH), 344-366 (YECT…QKAH), 372-394 (YICR…QRIH), 400-422 (YICN…RRTH), 428-450 (YVCN…QRFH), 456-478 (FVCT…QRIH), 484-506 (YTCS…RRTH), and 512-535 (YGCS…GMLH).

Belongs to the krueppel C2H2-type zinc-finger protein family.

The protein localises to the nucleus. Its function is as follows. May be involved in transcriptional regulation. In Homo sapiens (Human), this protein is Zinc finger protein 613 (ZNF613).